The sequence spans 47 residues: PhoP/PhoQ regulator MgrB (47 aa).

The chain crosses the membrane as a helical span at residues 6-26 (WVVLGIVVVVCLLLWAQVFNI).

This sequence belongs to the MgrB family. As to quaternary structure, may form homooligomers. Probably interacts with the periplasmic domain of PhoQ.

The protein localises to the cell inner membrane. Functionally, phoP-regulated transcription is redox-sensitive, being activated when the periplasm becomes more reducing. MgrB acts between DsbA/DsbB and PhoP/PhoQ in this pathway. Represses PhoP/PhoQ signaling, possibly by binding to the periplasmic domain of PhoQ, altering its activity and that of downstream effector PhoP. In Salmonella agona (strain SL483), this protein is PhoP/PhoQ regulator MgrB.